Here is a 380-residue protein sequence, read N- to C-terminus: Flap endonuclease 1 (380 aa).

Residues 1-104 form an N-domain region; that stretch reads MGIQGLAKLI…GELAKRSERR (104 aa). Arginine 19 bears the Symmetric dimethylarginine; by PRMT5 mark. A Mg(2+)-binding site is contributed by aspartate 34. DNA-binding residues include arginine 47 and arginine 70. Residue lysine 80 is modified to N6-acetyllysine. Aspartate 86 is a Mg(2+) binding site. Arginine 100 and arginine 104 each carry symmetric dimethylarginine; by PRMT5. The tract at residues 122–253 is I-domain; sequence EVEKFTKRLV…KRAVDLIQKH (132 aa). 4 residues coordinate Mg(2+): glutamate 158, glutamate 160, aspartate 179, and aspartate 181. Glutamate 158 contacts DNA. Serine 187 is subject to Phosphoserine; by CDK2. Arginine 192 is subject to Symmetric dimethylarginine; by PRMT5. Serine 197 carries the post-translational modification Phosphoserine. Residues glycine 231 and aspartate 233 each coordinate DNA. Aspartate 233 contributes to the Mg(2+) binding site. Phosphoserine is present on residues serine 255, serine 293, and serine 335. The tract at residues 327–380 is disordered; it reads RLSKSRQGSTQGRLDDFFKVTGSLSSAKRKEPEPKGAAKKKAKTGAAGKFKRGK. Threonine 336 carries the post-translational modification Phosphothreonine. An interaction with PCNA region spans residues 336–344; sequence TQGRLDDFF. Lysine 354, lysine 375, lysine 377, and lysine 380 each carry N6-acetyllysine. Positions 363–380 are enriched in basic residues; that stretch reads AAKKKAKTGAAGKFKRGK.

It belongs to the XPG/RAD2 endonuclease family. FEN1 subfamily. In terms of assembly, interacts with PCNA. Three molecules of FEN1 bind to one PCNA trimer with each molecule binding to one PCNA monomer. PCNA stimulates the nuclease activity without altering cleavage specificity. The C-terminal domain binds EP300; can bind simultaneously to both PCNA and EP300. Interacts with DDX11; this interaction is direct and increases flap endonuclease activity of FEN1. Interacts with WDR4; regulating its endonuclease activity. Interacts with POLB. Mg(2+) serves as cofactor. In terms of processing, acetylated by EP300. Acetylation inhibits both endonuclease and exonuclease activity. Acetylation also reduces DNA-binding activity but does not affect interaction with PCNA or EP300. Phosphorylation upon DNA damage induces relocalization to the nuclear plasma. Phosphorylation at Ser-187 by CDK2 occurs during late S-phase and results in dissociation from PCNA. Post-translationally, methylation at Arg-192 by PRMT5 impedes Ser-187 phosphorylation and increases interaction with PCNA.

The protein resides in the nucleus. It is found in the nucleolus. Its subcellular location is the nucleoplasm. The protein localises to the mitochondrion. In terms of biological role, structure-specific nuclease with 5'-flap endonuclease and 5'-3' exonuclease activities involved in DNA replication and repair. During DNA replication, cleaves the 5'-overhanging flap structure that is generated by displacement synthesis when DNA polymerase encounters the 5'-end of a downstream Okazaki fragment. It enters the flap from the 5'-end and then tracks to cleave the flap base, leaving a nick for ligation. Also involved in the long patch base excision repair (LP-BER) pathway, by cleaving within the apurinic/apyrimidinic (AP) site-terminated flap. Acts as a genome stabilization factor that prevents flaps from equilibrating into structures that lead to duplications and deletions. Also possesses 5'-3' exonuclease activity on nicked or gapped double-stranded DNA, and exhibits RNase H activity. Also involved in replication and repair of rDNA and in repairing mitochondrial DNA. This chain is Flap endonuclease 1, found in Bos taurus (Bovine).